The chain runs to 89 residues: Small ribosomal subunit protein uS15 (89 aa).

Belongs to the universal ribosomal protein uS15 family. In terms of assembly, part of the 30S ribosomal subunit. Forms a bridge to the 50S subunit in the 70S ribosome, contacting the 23S rRNA.

In terms of biological role, one of the primary rRNA binding proteins, it binds directly to 16S rRNA where it helps nucleate assembly of the platform of the 30S subunit by binding and bridging several RNA helices of the 16S rRNA. Functionally, forms an intersubunit bridge (bridge B4) with the 23S rRNA of the 50S subunit in the ribosome. This is Small ribosomal subunit protein uS15 from Chlorobium phaeobacteroides (strain BS1).